The chain runs to 150 residues: Protein adenylyltransferase MntA (150 aa).

The GSX(10)DXD motif motif lies at 32–46 (GSRATGNINANSDWD). Active-site residues include D44 and D46. 3 residues coordinate Mg(2+): D44, D46, and D86.

The protein belongs to the MntA antitoxin family. In terms of assembly, forms a complex with HepT, probably MntA(1):HepT(2) in vivo; can only be purified when both 'Arg-102' and 'Tyr-109' (or 'His-107' and 'Tyr-109') of HepThave been mutated. The fully di-AMPylated HepT homodimer is not found in a complex with MntA. The cofactor is Mg(2+).

The catalysed reaction is L-tyrosyl-[protein] + ATP = O-(5'-adenylyl)-L-tyrosyl-[protein] + diphosphate. It carries out the reaction O-(5'-adenylyl)-L-tyrosyl-[protein] + ATP = O-[5'-(adenylyl-(5'-&gt;3')-adenylyl)]-L-tyrosyl-[protein] + diphosphate. Functionally, antitoxin component of a type VII toxin-antitoxin (TA) system. Upon cloning in E.coli neutralizes the effect of cognate toxin HepT. Neutralization is mostly due to di-AMPylation of toxin by this enzyme. Successively di-AMPylates HepT on 'Tyr-109'. In vitro will use ATP, dATP, GTP, dGTP, TTP or UTP to generate a mono-modified protein, but requires a purine nucleotide for the second modification reaction (ATP, dATP or GTP). The protein is Protein adenylyltransferase MntA of Aphanizomenon flos-aquae (strain 2012/KM1/D3).